The primary structure comprises 495 residues: Formin-like protein 17 (495 aa).

Residues 1–92 are disordered; the sequence is MDIRELIDIT…HNLKGQGQTR (92 aa). Residues 19 to 29 show a composition bias toward pro residues; it reads GPPPPPPPPLL. Residues 30–39 are compositionally biased toward low complexity; sequence QPHHSALSSS. The 401-residue stretch at 86 to 486 folds into the FH2 domain; sequence KGQGQTRKAN…RAQKEAENEK (401 aa).

Belongs to the formin-like family. Class-II subfamily.

The sequence is that of Formin-like protein 17 (FH17) from Arabidopsis thaliana (Mouse-ear cress).